The chain runs to 332 residues: 5-dehydro-2-deoxygluconokinase (332 aa).

Belongs to the carbohydrate kinase PfkB family.

It carries out the reaction 5-dehydro-2-deoxy-D-gluconate + ATP = 6-phospho-5-dehydro-2-deoxy-D-gluconate + ADP + H(+). Its pathway is polyol metabolism; myo-inositol degradation into acetyl-CoA; acetyl-CoA from myo-inositol: step 5/7. Functionally, catalyzes the phosphorylation of 5-dehydro-2-deoxy-D-gluconate (2-deoxy-5-keto-D-gluconate or DKG) to 6-phospho-5-dehydro-2-deoxy-D-gluconate (DKGP). In Bacillus thuringiensis (strain Al Hakam), this protein is 5-dehydro-2-deoxygluconokinase.